The sequence spans 940 residues: Isoleucine--tRNA ligase (940 aa).

The 'HIGH' region motif lies at 58–68; that stretch reads PYANGSIHIGH. Residue Glu-564 participates in L-isoleucyl-5'-AMP binding. A 'KMSKS' region motif is present at residues 605–609; the sequence is KMSKS. Lys-608 is a binding site for ATP. Positions 903, 906, 923, and 926 each coordinate Zn(2+).

It belongs to the class-I aminoacyl-tRNA synthetase family. IleS type 1 subfamily. In terms of assembly, monomer. Zn(2+) is required as a cofactor.

The protein localises to the cytoplasm. The catalysed reaction is tRNA(Ile) + L-isoleucine + ATP = L-isoleucyl-tRNA(Ile) + AMP + diphosphate. In terms of biological role, catalyzes the attachment of isoleucine to tRNA(Ile). As IleRS can inadvertently accommodate and process structurally similar amino acids such as valine, to avoid such errors it has two additional distinct tRNA(Ile)-dependent editing activities. One activity is designated as 'pretransfer' editing and involves the hydrolysis of activated Val-AMP. The other activity is designated 'posttransfer' editing and involves deacylation of mischarged Val-tRNA(Ile). The chain is Isoleucine--tRNA ligase from Shewanella baltica (strain OS155 / ATCC BAA-1091).